The sequence spans 306 residues: GTPase Era (306 aa).

Residues Lys14 to Glu181 enclose the Era-type G domain. Positions Gly22–Ser29 are G1. Residue Gly22 to Ser29 coordinates GTP. Residues Gln48 to Asn52 form a G2 region. The G3 stretch occupies residues Asp69–Gly72. GTP is bound by residues Asp69–Ile73 and Asn131–Asp134. Residues Asn131–Asp134 form a G4 region. The tract at residues Ile160–Ala162 is G5. The region spanning Thr212–Lys290 is the KH type-2 domain.

It belongs to the TRAFAC class TrmE-Era-EngA-EngB-Septin-like GTPase superfamily. Era GTPase family. As to quaternary structure, monomer.

Its subcellular location is the cytoplasm. The protein resides in the cell inner membrane. Its function is as follows. An essential GTPase that binds both GDP and GTP, with rapid nucleotide exchange. Plays a role in 16S rRNA processing and 30S ribosomal subunit biogenesis and possibly also in cell cycle regulation and energy metabolism. The chain is GTPase Era from Syntrophus aciditrophicus (strain SB).